Consider the following 284-residue polypeptide: Rubber cis-polyprenyltransferase HRT2 (284 aa).

The active site involves aspartate 41.

It belongs to the UPP synthase family. In terms of tissue distribution, predominantly expressed in latex.

It catalyses the reaction (cis-prenyl)(n)-diphosphate + isopentenyl diphosphate = (cis-prenyl)(n+1)-diphosphate + diphosphate. Its function is as follows. Proposed to be involved in rubber biosynthesis as a particle-bound rubber transferase responsible for the cis-1,4-polymerization of isoprene subunits. Probably requires additional factors for the production of high molecular mass rubber. This chain is Rubber cis-polyprenyltransferase HRT2 (HRT2), found in Hevea brasiliensis (Para rubber tree).